Here is a 167-residue protein sequence, read N- to C-terminus: Envelope glycoprotein L (167 aa).

Positions 1–20 are cleaved as a signal peptide; that stretch reads MGIFALFAVLWTTLLVTSHA. An interaction with gH region spans residues 18–131; sequence SHAYVALPCC…ADSSIHNVNI (114 aa). Residues 142–154 show a composition bias toward polar residues; the sequence is RTGSVSGSQTRAK. Positions 142–167 are disordered; the sequence is RTGSVSGSQTRAKSSSRRAHAGQKGK. Basic residues predominate over residues 155–167; it reads SSSRRAHAGQKGK.

This sequence belongs to the herpesviridae glycoprotein L family. As to quaternary structure, interacts with glycoprotein H (gH); this interaction is necessary for the correct processing and cell surface expression of gH. The heterodimer gH/gL seems to interact with gB trimers during fusion. When in complex with gH, interacts with host EPHA2; this interaction triggers EPHA2 phosphorylation and endocytosis, allowing virus entry.

Its subcellular location is the virion membrane. It is found in the host cell membrane. The protein localises to the host Golgi apparatus. The protein resides in the host trans-Golgi network. In terms of biological role, the heterodimer glycoprotein H-glycoprotein L is required for the fusion of viral and plasma membranes leading to virus entry into the host cell. Acts as a functional inhibitor of gH and maintains gH in an inhibited form. Upon binding to host integrins, gL dissociates from gH leading to activation of the viral fusion glycoproteins gB and gH. Targets heparan sulfate proteoglycans of the syndecan family as well as host EPHA2 to promote viral entry. This chain is Envelope glycoprotein L, found in Human herpesvirus 8 type P (isolate GK18) (HHV-8).